The following is an 896-amino-acid chain: Bifunctional glutamine synthetase adenylyltransferase/adenylyl-removing enzyme (896 aa).

Positions M1 to E411 are adenylyl removase. Residues N417–A896 are adenylyl transferase.

It belongs to the GlnE family. Mg(2+) serves as cofactor.

The enzyme catalyses [glutamine synthetase]-O(4)-(5'-adenylyl)-L-tyrosine + phosphate = [glutamine synthetase]-L-tyrosine + ADP. It carries out the reaction [glutamine synthetase]-L-tyrosine + ATP = [glutamine synthetase]-O(4)-(5'-adenylyl)-L-tyrosine + diphosphate. Functionally, involved in the regulation of glutamine synthetase GlnA, a key enzyme in the process to assimilate ammonia. When cellular nitrogen levels are high, the C-terminal adenylyl transferase (AT) inactivates GlnA by covalent transfer of an adenylyl group from ATP to specific tyrosine residue of GlnA, thus reducing its activity. Conversely, when nitrogen levels are low, the N-terminal adenylyl removase (AR) activates GlnA by removing the adenylyl group by phosphorolysis, increasing its activity. The regulatory region of GlnE binds the signal transduction protein PII (GlnB) which indicates the nitrogen status of the cell. The polypeptide is Bifunctional glutamine synthetase adenylyltransferase/adenylyl-removing enzyme (Neisseria meningitidis serogroup A / serotype 4A (strain DSM 15465 / Z2491)).